The primary structure comprises 255 residues: uncharacterized protein (255 aa).

This is an uncharacterized protein from Methanocaldococcus jannaschii (strain ATCC 43067 / DSM 2661 / JAL-1 / JCM 10045 / NBRC 100440) (Methanococcus jannaschii).